The chain runs to 321 residues: Olfactory receptor 14J1 (321 aa).

At 1-23 the chain is on the extracellular side; sequence MVNLTSMSGFLLMGFSDERKLQI. Asn-3 carries N-linked (GlcNAc...) asparagine glycosylation. The helical transmembrane segment at 24–44 threads the bilayer; it reads LHALVFLVTYLLALTGNLLII. The Cytoplasmic segment spans residues 45–52; the sequence is TIITVDRR. The helical transmembrane segment at 53 to 73 threads the bilayer; that stretch reads LHSPMYYFLKHLSLLDLCFIS. The Extracellular portion of the chain corresponds to 74-97; that stretch reads VTVPQSIANSLMGNGYISLVQCIL. A disulfide bridge connects residues Cys-95 and Cys-187. A helical transmembrane segment spans residues 98–118; that stretch reads QVFFFIALASSEVAILTVMSY. The Cytoplasmic segment spans residues 119–137; sequence DRYAAICQPLHYETIMDPR. The helical transmembrane segment at 138–158 threads the bilayer; sequence ACRHAVIAVWIAGGLSGLMHA. The Extracellular portion of the chain corresponds to 159–194; that stretch reads AINFSIPLCGKRVIHQFFCDVPQMLKLACSYEFINE. The chain crosses the membrane as a helical span at residues 195 to 215; sequence IALAAFTTSAAFICLISIVLS. Residues 216–235 are Cytoplasmic-facing; it reads YIRIFSTVLRIPSAEGRTKV. Residues 236–256 form a helical membrane-spanning segment; sequence FSTCLPHLFVATFFLSAAGFE. Topologically, residues 257-269 are extracellular; sequence FLRLPSDSSSTVD. Residues 270-290 traverse the membrane as a helical segment; the sequence is LVFSVFYTVIPPTLNPVIYSL. Residues 291 to 321 lie on the Cytoplasmic side of the membrane; the sequence is RNDSMKAALRKMLSKEELPQRKMCLKAMFKL.

Belongs to the G-protein coupled receptor 1 family.

It is found in the cell membrane. Odorant receptor. The sequence is that of Olfactory receptor 14J1 (OR14J1) from Homo sapiens (Human).